A 644-amino-acid chain; its full sequence is Transcription factor btd (644 aa).

2 disordered regions span residues 16-65 (HQAQ…TQQQ) and 101-196 (APPS…AGSP). 2 stretches are compositionally biased toward low complexity: residues 101–119 (APPS…SSPL) and 140–196 (ASPN…AGSP). 3 C2H2-type zinc fingers span residues 333–357 (HICH…LRWH), 363–385 (FLCL…GRTH), and 391–413 (YACP…KKTH). 2 disordered regions span residues 437-461 (LEKK…QPDT) and 478-537 (TSAG…SSSA). Composition is skewed to low complexity over residues 499–508 (TTTTSSAAAS) and 521–537 (AIQP…SSSA).

The protein resides in the nucleus. In terms of biological role, required for the development of the antennal, intercalary and mandibular segments of the head. The protein is Transcription factor btd (btd) of Drosophila melanogaster (Fruit fly).